Here is a 102-residue protein sequence, read N- to C-terminus: UPF0147 protein MTH_1407 (102 aa).

Belongs to the UPF0147 family.

This is UPF0147 protein MTH_1407 from Methanothermobacter thermautotrophicus (strain ATCC 29096 / DSM 1053 / JCM 10044 / NBRC 100330 / Delta H) (Methanobacterium thermoautotrophicum).